Reading from the N-terminus, the 148-residue chain is uncharacterized protein (148 aa).

The region spanning 4 to 65 (LDKVDIQLVK…IPDLDKLGYM (62 aa)) is the HTH asnC-type domain. A DNA-binding region (H-T-H motif) is located at residues 23-42 (YRELAELMNTTRQRIARRIT).

This is an uncharacterized protein from Pyrococcus abyssi (strain GE5 / Orsay).